A 451-amino-acid polypeptide reads, in one-letter code: Tol-Pal system protein TolB 1 (451 aa).

An N-terminal signal peptide occupies residues 1–19; sequence MTLRMLFAFALLAAAPAQA. The span at 18 to 29 shows a compositional bias: low complexity; sequence QAQQTEPQPAEE. Disordered regions lie at residues 18-37 and 431-451; these read QAQQ…GTVS and NERR…PLLP.

It belongs to the TolB family. In terms of assembly, the Tol-Pal system is composed of five core proteins: the inner membrane proteins TolA, TolQ and TolR, the periplasmic protein TolB and the outer membrane protein Pal. They form a network linking the inner and outer membranes and the peptidoglycan layer.

Its subcellular location is the periplasm. Its function is as follows. Part of the Tol-Pal system, which plays a role in outer membrane invagination during cell division and is important for maintaining outer membrane integrity. The chain is Tol-Pal system protein TolB 1 from Novosphingobium aromaticivorans (strain ATCC 700278 / DSM 12444 / CCUG 56034 / CIP 105152 / NBRC 16084 / F199).